Here is a 129-residue protein sequence, read N- to C-terminus: Small ribosomal subunit protein uS11 (129 aa).

Belongs to the universal ribosomal protein uS11 family. Part of the 30S ribosomal subunit. Interacts with proteins S7 and S18. Binds to IF-3.

In terms of biological role, located on the platform of the 30S subunit, it bridges several disparate RNA helices of the 16S rRNA. Forms part of the Shine-Dalgarno cleft in the 70S ribosome. The protein is Small ribosomal subunit protein uS11 of Sinorhizobium medicae (strain WSM419) (Ensifer medicae).